Here is a 359-residue protein sequence, read N- to C-terminus: ELAV-like protein 2 (359 aa).

The interval 1–39 (METQLSNGPTCNNTANGPTTVNNNCSSPVDSGNTEDSKT) is disordered. RRM domains are found at residues 39–117 (TNLI…YARP) and 125–205 (ANLY…FANN). Serine 221 carries the post-translational modification Phosphoserine. The 79-residue stretch at 276-354 (WCIFVYNLAP…RVLQVSFKTN (79 aa)) folds into the RRM 3 domain.

Belongs to the RRM elav family. In terms of assembly, interacts with IGF2BP1. Interacts with MAP1B light chain LC1.

In terms of biological role, RNA-binding protein that binds to the 3' untranslated region (3'UTR) of target mRNAs. Seems to recognize a GAAA motif. Can bind to its own 3'UTR, the FOS 3'UTR and the ID 3'UTR. In Rattus norvegicus (Rat), this protein is ELAV-like protein 2 (Elavl2).